The chain runs to 506 residues: 2-isopropylmalate synthase (506 aa).

One can recognise a Pyruvate carboxyltransferase domain in the interval 4-266; the sequence is ILFMDTTLRD…QSSIILKEIK (263 aa). Asp13, His201, His203, and Asn237 together coordinate Mn(2+). The regulatory domain stretch occupies residues 390–506; sequence NIKQLQVHFV…KLKALLTLVK (117 aa).

The protein belongs to the alpha-IPM synthase/homocitrate synthase family. LeuA type 1 subfamily. In terms of assembly, homodimer. Requires Mn(2+) as cofactor.

It localises to the cytoplasm. The catalysed reaction is 3-methyl-2-oxobutanoate + acetyl-CoA + H2O = (2S)-2-isopropylmalate + CoA + H(+). Its pathway is amino-acid biosynthesis; L-leucine biosynthesis; L-leucine from 3-methyl-2-oxobutanoate: step 1/4. Functionally, catalyzes the condensation of the acetyl group of acetyl-CoA with 3-methyl-2-oxobutanoate (2-ketoisovalerate) to form 3-carboxy-3-hydroxy-4-methylpentanoate (2-isopropylmalate). The chain is 2-isopropylmalate synthase from Bacillus cytotoxicus (strain DSM 22905 / CIP 110041 / 391-98 / NVH 391-98).